A 342-amino-acid polypeptide reads, in one-letter code: Methionyl-tRNA formyltransferase (342 aa).

(6S)-5,6,7,8-tetrahydrofolate is bound at residue 119 to 122; that stretch reads SILP.

This sequence belongs to the Fmt family.

The enzyme catalyses L-methionyl-tRNA(fMet) + (6R)-10-formyltetrahydrofolate = N-formyl-L-methionyl-tRNA(fMet) + (6S)-5,6,7,8-tetrahydrofolate + H(+). Functionally, attaches a formyl group to the free amino group of methionyl-tRNA(fMet). The formyl group appears to play a dual role in the initiator identity of N-formylmethionyl-tRNA by promoting its recognition by IF2 and preventing the misappropriation of this tRNA by the elongation apparatus. This chain is Methionyl-tRNA formyltransferase, found in Nostoc sp. (strain PCC 7120 / SAG 25.82 / UTEX 2576).